A 1569-amino-acid chain; its full sequence is Pentafunctional AROM polypeptide (1569 aa).

Positions 1-382 (MAEAKKPGPE…HEPRASVVDD (382 aa)) are 3-dehydroquinate synthase. NAD(+)-binding positions include 49–51 (DTN), 84–87 (EASK), 115–117 (GGV), and Asp120. Arg131 lines the 7-phospho-2-dehydro-3-deoxy-D-arabino-heptonate pocket. 140 to 141 (TT) provides a ligand contact to NAD(+). Positions 147 and 153 each coordinate 7-phospho-2-dehydro-3-deoxy-D-arabino-heptonate. Lys162 contributes to the NAD(+) binding site. A 7-phospho-2-dehydro-3-deoxy-D-arabino-heptonate-binding site is contributed by Asn163. Residues 180-183 (FLET) and Asn191 each bind NAD(+). Glu195 lines the Zn(2+) pocket. 7-phospho-2-dehydro-3-deoxy-D-arabino-heptonate is bound by residues 195-198 (EVVK) and Lys248. The active-site Proton acceptor; for 3-dehydroquinate synthase activity is the Glu258. 7-phospho-2-dehydro-3-deoxy-D-arabino-heptonate contacts are provided by residues 262-266 (RNLLN) and His269. His269 provides a ligand contact to Zn(2+). The active-site Proton acceptor; for 3-dehydroquinate synthase activity is the His273. 7-phospho-2-dehydro-3-deoxy-D-arabino-heptonate-binding residues include His285 and Lys354. Residue His285 participates in Zn(2+) binding. An EPSP synthase region spans residues 395–837 (VTPGVPSNLD…WDILSQAFKV (443 aa)). Cys819 acts as the For EPSP synthase activity in catalysis. A shikimate kinase region spans residues 859 to 1053 (ERSVFIIGMR…MEKDHSFFVS (195 aa)). 866 to 873 (GMRGAGKT) is an ATP binding site. The 3-dehydroquinase stretch occupies residues 1054–1267 (LTVPDVSEAA…AAPGQMSAAE (214 aa)). The active-site Proton acceptor; for 3-dehydroquinate dehydratase activity is His1170. Lys1198 acts as the Schiff-base intermediate with substrate; for 3-dehydroquinate dehydratase activity in catalysis. The tract at residues 1280-1569 (PCNFYLFGKP…RDARSAVLGL (290 aa)) is shikimate dehydrogenase.

In the N-terminal section; belongs to the sugar phosphate cyclases superfamily. Dehydroquinate synthase family. This sequence in the 2nd section; belongs to the EPSP synthase family. It in the 3rd section; belongs to the shikimate kinase family. The protein in the 4th section; belongs to the type-I 3-dehydroquinase family. In the C-terminal section; belongs to the shikimate dehydrogenase family. Homodimer. It depends on Zn(2+) as a cofactor.

The protein localises to the cytoplasm. It carries out the reaction 7-phospho-2-dehydro-3-deoxy-D-arabino-heptonate = 3-dehydroquinate + phosphate. The catalysed reaction is 3-dehydroquinate = 3-dehydroshikimate + H2O. It catalyses the reaction shikimate + NADP(+) = 3-dehydroshikimate + NADPH + H(+). The enzyme catalyses shikimate + ATP = 3-phosphoshikimate + ADP + H(+). It carries out the reaction 3-phosphoshikimate + phosphoenolpyruvate = 5-O-(1-carboxyvinyl)-3-phosphoshikimate + phosphate. Its pathway is metabolic intermediate biosynthesis; chorismate biosynthesis; chorismate from D-erythrose 4-phosphate and phosphoenolpyruvate: step 2/7. The protein operates within metabolic intermediate biosynthesis; chorismate biosynthesis; chorismate from D-erythrose 4-phosphate and phosphoenolpyruvate: step 3/7. It participates in metabolic intermediate biosynthesis; chorismate biosynthesis; chorismate from D-erythrose 4-phosphate and phosphoenolpyruvate: step 4/7. It functions in the pathway metabolic intermediate biosynthesis; chorismate biosynthesis; chorismate from D-erythrose 4-phosphate and phosphoenolpyruvate: step 5/7. Its pathway is metabolic intermediate biosynthesis; chorismate biosynthesis; chorismate from D-erythrose 4-phosphate and phosphoenolpyruvate: step 6/7. In terms of biological role, the AROM polypeptide catalyzes 5 consecutive enzymatic reactions in prechorismate polyaromatic amino acid biosynthesis. This Fusarium vanettenii (strain ATCC MYA-4622 / CBS 123669 / FGSC 9596 / NRRL 45880 / 77-13-4) (Fusarium solani subsp. pisi) protein is Pentafunctional AROM polypeptide.